The primary structure comprises 170 residues: Cytidine diphosphoramidate kinase (170 aa).

This sequence belongs to the APS kinase family.

The catalysed reaction is cytidine 5'-diphosphoramidate + ATP = cytidine 3'-phospho-5'-diphosphoramidate + ADP + H(+). Its pathway is capsule biogenesis; capsule polysaccharide biosynthesis. Involved in the biosynthesis of the O-methyl phosphoramidate (MeOPN) group found on the capsular polysaccharide (CPS) of C.jejuni. Catalyzes the ATP-dependent phosphorylation of cytidine diphosphoramidate (CDP-NH(2)) to form cytidine 3'-phosphate 5'-diphosphoramidate. Can also use other substrates such as the corresponding adenine and uridine diphosphoramidate derivatives or cytidine diphosphoramidate analogs, with lower efficiency. The sequence is that of Cytidine diphosphoramidate kinase from Campylobacter jejuni subsp. jejuni serotype O:2 (strain ATCC 700819 / NCTC 11168).